Reading from the N-terminus, the 206-residue chain is Ribosomal RNA large subunit methyltransferase E (206 aa).

S-adenosyl-L-methionine contacts are provided by G60, W62, D80, D96, and D121. Catalysis depends on K161, which acts as the Proton acceptor.

It belongs to the class I-like SAM-binding methyltransferase superfamily. RNA methyltransferase RlmE family.

Its subcellular location is the cytoplasm. It carries out the reaction uridine(2552) in 23S rRNA + S-adenosyl-L-methionine = 2'-O-methyluridine(2552) in 23S rRNA + S-adenosyl-L-homocysteine + H(+). Specifically methylates the uridine in position 2552 of 23S rRNA at the 2'-O position of the ribose in the fully assembled 50S ribosomal subunit. The sequence is that of Ribosomal RNA large subunit methyltransferase E from Legionella pneumophila (strain Lens).